The primary structure comprises 58 residues: Large ribosomal subunit protein uL30 (58 aa).

The protein belongs to the universal ribosomal protein uL30 family. Part of the 50S ribosomal subunit.

The sequence is that of Large ribosomal subunit protein uL30 from Wigglesworthia glossinidia brevipalpis.